The chain runs to 93 residues: Putative defensin-like protein 190 (93 aa).

The N-terminal stretch at 1–30 (MKMAKAAATNDFGFITCLVIFLVLAGISNG) is a signal peptide. Cystine bridges form between C39–C89, C55–C75, C60–C84, and C64–C86.

It belongs to the DEFL family.

It localises to the secreted. This chain is Putative defensin-like protein 190, found in Arabidopsis thaliana (Mouse-ear cress).